Here is a 386-residue protein sequence, read N- to C-terminus: Histidinol-phosphate aminotransferase (386 aa).

Over residues 1–11 (MMVRKSTASNR) the composition is skewed to polar residues. A disordered region spans residues 1–22 (MMVRKSTASNRRLQDKGDEEPV). N6-(pyridoxal phosphate)lysine is present on lysine 248.

Belongs to the class-II pyridoxal-phosphate-dependent aminotransferase family. Histidinol-phosphate aminotransferase subfamily. Homodimer. The cofactor is pyridoxal 5'-phosphate.

It catalyses the reaction L-histidinol phosphate + 2-oxoglutarate = 3-(imidazol-4-yl)-2-oxopropyl phosphate + L-glutamate. It functions in the pathway amino-acid biosynthesis; L-histidine biosynthesis; L-histidine from 5-phospho-alpha-D-ribose 1-diphosphate: step 7/9. The protein is Histidinol-phosphate aminotransferase of Moorella thermoacetica (strain ATCC 39073 / JCM 9320).